We begin with the raw amino-acid sequence, 603 residues long: Zinc finger protein 415 (603 aa).

The C2H2-type 1; degenerate zinc-finger motif lies at 264 to 286; it reads YRYIECDKALNHGSHMTVRQVSH. 11 C2H2-type zinc fingers span residues 292–314, 320–342, 348–370, 376–398, 404–426, 432–454, 460–482, 488–510, 516–538, 544–566, and 572–594; these read YKCD…WRVH, YKCN…RRVH, YKCY…QKTH, YTCK…QVIH, YKCN…QRIH, YKCN…WRIH, YKCN…QVIH, YKCN…QIIH, and YKCS…QIIH.

As to expression, expressed in all tissues examined. Isoforms are differentially expressed. Isoform 3 and isoform 5 were highly expressed, isoform 4 moderately expressed, isoform 2 lower expression, the lowest expression level was seem with isoform 1.

The protein resides in the nucleus. It is found in the cytoplasm. Involved in transcriptional regulation. Transcriptional activity differed among the various isoforms. All isoforms except isoform 3 seem to suppresses the transcriptional activities of AP-1 and p53/TP53. This is Zinc finger protein 415 (ZNF415) from Homo sapiens (Human).